The primary structure comprises 206 residues: FMN-dependent NADH:quinone oxidoreductase (206 aa).

FMN contacts are provided by residues serine 10 and 15-17 (SVS).

This sequence belongs to the azoreductase type 1 family. Homodimer. FMN is required as a cofactor.

It carries out the reaction 2 a quinone + NADH + H(+) = 2 a 1,4-benzosemiquinone + NAD(+). The catalysed reaction is N,N-dimethyl-1,4-phenylenediamine + anthranilate + 2 NAD(+) = 2-(4-dimethylaminophenyl)diazenylbenzoate + 2 NADH + 2 H(+). Its function is as follows. Quinone reductase that provides resistance to thiol-specific stress caused by electrophilic quinones. Also exhibits azoreductase activity. Catalyzes the reductive cleavage of the azo bond in aromatic azo compounds to the corresponding amines. This chain is FMN-dependent NADH:quinone oxidoreductase, found in Acidobacterium capsulatum (strain ATCC 51196 / DSM 11244 / BCRC 80197 / JCM 7670 / NBRC 15755 / NCIMB 13165 / 161).